A 319-amino-acid polypeptide reads, in one-letter code: Probable metallo-hydrolase YqjP (319 aa).

Residues His67, His69, Asp71, His72, His165, Asp184, and His231 each contribute to the Zn(2+) site.

It belongs to the metallo-beta-lactamase superfamily. The cofactor is Zn(2+).

This is Probable metallo-hydrolase YqjP (yqjP) from Bacillus subtilis (strain 168).